The primary structure comprises 448 residues: Protein arginine N-methyltransferase 2 (448 aa).

Interaction with ESR1 stretches follow at residues 1–289 (MEAP…SALK) and 145–287 (KESL…NLSA). In terms of domain architecture, SH3 spans 42–101 (LQPEEFVAIADYTATDETQLSFLRGEKILILRQTTADWWWGERAGCCGYIPANHLGKQLE). Asymmetric dimethylarginine is present on residues Arg-73 and Arg-84. The segment at 95–219 (HLGKQLEEYD…DVVLPEKVDV (125 aa)) is interaction with RB1. One can recognise an SAM-dependent MTase PRMT-type domain in the interval 111–414 (DEEYFDSYGT…CCVTKKSGME (304 aa)). The S-adenosyl-L-methionine site is built by His-124, Arg-133, Gly-157, Glu-180, and Glu-209. Catalysis depends on residues Glu-223 and Glu-232.

This sequence belongs to the class I-like SAM-binding methyltransferase superfamily. Protein arginine N-methyltransferase family. In terms of assembly, self-associates. Interacts with HNRNPUL1. Interacts with NFKBIA. Interacts with NCOA6 coactivator. Interacts (via SH3 domain) with PRMT8. Interacts with AR. Interacts with ESR1, ESR2, PGR, PPARG, RARA, RXRA and THRB. Interacts with RB1 and E2F1. As to expression, expressed in liver, pancreas, lung, brain, skeletal muscle, heart, muscle and fat.

The protein localises to the cytoplasm. Its subcellular location is the nucleus. The enzyme catalyses L-arginyl-[protein] + 2 S-adenosyl-L-methionine = N(omega),N(omega)-dimethyl-L-arginyl-[protein] + 2 S-adenosyl-L-homocysteine + 2 H(+). Its function is as follows. Arginine methyltransferase that methylates the guanidino nitrogens of arginyl residues in proteins such as STAT3, FBL, histone H4. May inhibit NF-kappa-B transcription, and promote apoptosis. Represses E2F1 transcriptional activity (in a RB1-dependent manner). Has a negative regulation effect on G1 to S transition of mitotic cell cycle. Involved in growth regulation. Acts as a coactivator (with NCOA2) of the androgen receptor (AR)-mediated transactivation. Acts as a coactivator (with estrogen) of estrogen receptor (ER)-mediated transactivation. Enhances PGR, PPARG, RARA-mediated transactivation. This is Protein arginine N-methyltransferase 2 (Prmt2) from Mus musculus (Mouse).